The sequence spans 357 residues: Alanine racemase (357 aa).

Lysine 33 serves as the catalytic Proton acceptor; specific for D-alanine. Position 33 is an N6-(pyridoxal phosphate)lysine (lysine 33). Arginine 129 lines the substrate pocket. Residue tyrosine 253 is the Proton acceptor; specific for L-alanine of the active site. Methionine 301 lines the substrate pocket.

This sequence belongs to the alanine racemase family. It depends on pyridoxal 5'-phosphate as a cofactor.

The catalysed reaction is L-alanine = D-alanine. Its pathway is amino-acid biosynthesis; D-alanine biosynthesis; D-alanine from L-alanine: step 1/1. Its function is as follows. Catalyzes the interconversion of L-alanine and D-alanine. May also act on other amino acids. The sequence is that of Alanine racemase (alr) from Pseudomonas entomophila (strain L48).